Here is a 475-residue protein sequence, read N- to C-terminus: Ribulose bisphosphate carboxylase large chain (475 aa).

A propeptide spanning residues 1-2 (MS) is cleaved from the precursor. Pro-3 is subject to N-acetylproline. An N6,N6,N6-trimethyllysine modification is found at Lys-14. Positions 123 and 173 each coordinate substrate. Residue Lys-175 is the Proton acceptor of the active site. Lys-177 lines the substrate pocket. Mg(2+) is bound by residues Lys-201, Asp-203, and Glu-204. N6-carboxylysine is present on Lys-201. Catalysis depends on His-294, which acts as the Proton acceptor. Residues Arg-295, His-327, and Ser-379 each coordinate substrate.

Belongs to the RuBisCO large chain family. Type I subfamily. In terms of assembly, heterohexadecamer of 8 large chains and 8 small chains; disulfide-linked. The disulfide link is formed within the large subunit homodimers. It depends on Mg(2+) as a cofactor. In terms of processing, the disulfide bond which can form in the large chain dimeric partners within the hexadecamer appears to be associated with oxidative stress and protein turnover.

It localises to the plastid. The protein localises to the chloroplast. It catalyses the reaction 2 (2R)-3-phosphoglycerate + 2 H(+) = D-ribulose 1,5-bisphosphate + CO2 + H2O. The catalysed reaction is D-ribulose 1,5-bisphosphate + O2 = 2-phosphoglycolate + (2R)-3-phosphoglycerate + 2 H(+). In terms of biological role, ruBisCO catalyzes two reactions: the carboxylation of D-ribulose 1,5-bisphosphate, the primary event in carbon dioxide fixation, as well as the oxidative fragmentation of the pentose substrate in the photorespiration process. Both reactions occur simultaneously and in competition at the same active site. The chain is Ribulose bisphosphate carboxylase large chain from Cryptomeria japonica (Japanese cedar).